The sequence spans 281 residues: NADPH-dependent 7-cyano-7-deazaguanine reductase (281 aa).

87 to 89 (IES) serves as a coordination point for substrate. 89-90 (SK) contacts NADPH. Catalysis depends on Cys-188, which acts as the Thioimide intermediate. The active-site Proton donor is the Asp-195. 227-228 (HE) provides a ligand contact to substrate. 256-257 (RG) provides a ligand contact to NADPH.

Belongs to the GTP cyclohydrolase I family. QueF type 2 subfamily. Homodimer.

It is found in the cytoplasm. It catalyses the reaction 7-aminomethyl-7-carbaguanine + 2 NADP(+) = 7-cyano-7-deazaguanine + 2 NADPH + 3 H(+). The protein operates within tRNA modification; tRNA-queuosine biosynthesis. In terms of biological role, catalyzes the NADPH-dependent reduction of 7-cyano-7-deazaguanine (preQ0) to 7-aminomethyl-7-deazaguanine (preQ1). The protein is NADPH-dependent 7-cyano-7-deazaguanine reductase of Photobacterium profundum (strain SS9).